Reading from the N-terminus, the 341-residue chain is Major histocompatibility complex class I-related protein 1 (341 aa).

The N-terminal stretch at 1–18 (MMLLLPLLAVFLVKRSHT) is a signal peptide. Residues 19-105 (RTHSLRYFRL…RHLQRHYNHS (87 aa)) form an alpha-1 region. The tract at residues 19–197 (RTHSLRYFRL…EYGRDTLERT (179 aa)) is antigen-binding cleft. Residues 19–296 (RTHSLRYFRL…APRESGDILR (278 aa)) lie on the Extracellular side of the membrane. 8-(9H-purin-6-yl)-2-oxa-8-azabicyclo[3.3.1]nona-3,6-diene-4,6-dicarbaldehyde-binding residues include tyrosine 25 and arginine 27. 5-(2-oxoethylideneamino)-6-(D-ribitylamino)uracil-binding residues include arginine 27, serine 42, and lysine 61. 3 residues coordinate 5-(2-oxopropylideneamino)-6-(D-ribitylamino)uracil: arginine 27, serine 42, and lysine 61. 7-hydroxy-6-methyl-8-(1-D-ribityl)lumazine is bound by residues arginine 27, serine 42, and lysine 61. Residues lysine 61 and histidine 76 each coordinate 8-(9H-purin-6-yl)-2-oxa-8-azabicyclo[3.3.1]nona-3,6-diene-4,6-dicarbaldehyde. Lysine 61 is a binding site for 2-amino-4-oxopteridine-6-carbaldehyde. Pyridoxal is bound at residue lysine 61. Residue asparagine 103 is glycosylated (N-linked (GlcNAc...) asparagine). Residues 106 to 197 (GLHTYQRMIG…EYGRDTLERT (92 aa)) form an alpha-2 region. Arginine 112 provides a ligand contact to 8-(9H-purin-6-yl)-2-oxa-8-azabicyclo[3.3.1]nona-3,6-diene-4,6-dicarbaldehyde. 5-(2-oxoethylideneamino)-6-(D-ribitylamino)uracil is bound by residues arginine 112, tyrosine 170, and glutamine 171. 5-(2-oxopropylideneamino)-6-(D-ribitylamino)uracil-binding residues include arginine 112, tyrosine 170, and glutamine 171. Positions 112, 170, and 171 each coordinate 7-hydroxy-6-methyl-8-(1-D-ribityl)lumazine. Disulfide bonds link cysteine 116–cysteine 179 and cysteine 218–cysteine 274. Residues 198–289 (EHPVVRTTRK…GRQMVLEAPR (92 aa)) are alpha-3. The 102-residue stretch at 200–301 (PVVRTTRKET…GDILRVSTIS (102 aa)) folds into the Ig-like C1-type domain. A connecting peptide region spans residues 290–296 (ESGDILR). A helical membrane pass occupies residues 297-317 (VSTISGTTILIIALAGVGVLI). The Cytoplasmic portion of the chain corresponds to 318-341 (WRRSQELKEVMYQPTQVNEGSSPS).

Belongs to the MHC class I family. Heterotrimer that consists of MR1, B2M and metabolite antigen. Major classes of metabolite ligands presented by MR1 include riboflavin-related antigens, pyrimidines and ribityl lumazines, nucleobase adducts and folate derivatives. Forms reversible covalent Schiff base complexes with microbial pyrimidine-based metabolite, which serves as a molecular switch triggering complete folding, stable association with B2M and translocation of the ternary complex from endoplasmic reticulum to the plasma membrane. Alternatively, forms non-Schiff base complexes with ribityl lumazines. On antigen-presenting cells, the ternary complex interacts with TCR on MR1-restricted CD4- or CD8-positive T cell subsets. Interacts with TAPBP and TAPBPL chaperones in the endoplasmic reticulum. TAPBP associated or not with MHC class I peptide loading complex binds ligand-free MR1 or MR1-B2M complex, providing for stable MR1 pools ready for metabolite antigen processing. TAPBPL interacts with MR1 in a ligand-independent way; this interaction may stabilize MR1 pool and facilitate ligand loading and dissociation. Structurally, MR1-B2M heterodimer adopts a topology similar to classical MHC class I molecules, with alpha-1 and alpha-2 domains of MR1 forming the antigen-binding cleft composed of two alpha-helices resting on a floor of 7-stranded anti-parallel beta-pleated sheet. In terms of processing, N-glycosylated. As to expression, highly expressed thymus. Expressed in liver, kidney, spleen, heart, brain, lung, skeletal muscle and testis.

Its subcellular location is the cell membrane. The protein localises to the endoplasmic reticulum membrane. The protein resides in the golgi apparatus membrane. It localises to the early endosome membrane. It is found in the late endosome membrane. Antigen-presenting molecule specialized in displaying microbial pyrimidine-based metabolites to alpha-beta T cell receptors (TCR) on innate-type mucosal-associated invariant T (MAIT) cells. In complex with B2M preferentially presents riboflavin-derived metabolites to semi-invariant TRAV1 TCRs on MAIT cells, guiding immune surveillance of the microbial metabolome at mucosal epithelial barriers. Signature pyrimidine-based microbial antigens are generated via non-enzymatic condensation of metabolite intermediates of the riboflavin pathway with by-products arising from other metabolic pathways such as glycolysis. Typical potent antigenic metabolites are 5-(2-oxoethylideneamino)-6-D-ribitylaminouracil (5-OE-RU) and 5-(2-oxopropylideneamino)-6-D-ribitylaminouracil (5-OP-RU), products of condensation of 5-amino-6-D-ribityaminouracil (5-A-RU) with glyoxal or methylglyoxal by-products, respectively. May present microbial antigens to various TRAV1-negative MAIT cell subsets, providing for unique recognition of diverse microbes, including pathogens that do not synthesize riboflavin. Upon antigen recognition, elicits rapid innate-type MAIT cell activation to eliminate pathogenic microbes by directly killing infected cells. During T cell development, drives thymic selection and post-thymic terminal differentiation of MAIT cells in a process dependent on commensal microflora. Acts as an immune sensor of cancer cell metabolome. May present a tumor-specific or -associated metabolite essential for cancer cell survival to a pan-cancer TCR on a non-MAIT CD8-positive T cell clone, triggering T cell-mediated killing of a wide range of cancer cell types. May present tumor-enriched pyridoxal and pyridoxal 5'-phosphate antigens, enabling preferential recognition of cancer cells. Presents nucleobase carbonyl adducts generated during oxidative stress. Captures M3Ade, a nucleobase adduct composed of one adenine modified by a malondialdehyde trimer, for recognition by MR1-restricted T cell clones expressing a polyclonal TCR repertoire. The polypeptide is Major histocompatibility complex class I-related protein 1 (Mus musculus (Mouse)).